Consider the following 196-residue polypeptide: UPF0319 protein VV1_0237 (196 aa).

Positions 1–19 are cleaved as a signal peptide; the sequence is MKKMMILSALALFSSSLFA.

The protein belongs to the UPF0319 family.

This Vibrio vulnificus (strain CMCP6) protein is UPF0319 protein VV1_0237.